A 74-amino-acid polypeptide reads, in one-letter code: ATP synthase subunit 9, mitochondrial (74 aa).

Transmembrane regions (helical) follow at residues 8–28 (IGAG…GNVF) and 50–70 (ILGF…AFLI).

The protein belongs to the ATPase C chain family. In terms of assembly, F-type ATPases have 2 components, CF(1) - the catalytic core - and CF(0) - the membrane proton channel. CF(1) has five subunits: alpha(3), beta(3), gamma(1), delta(1), epsilon(1). CF(0) has three main subunits: a, b and c.

Its subcellular location is the mitochondrion membrane. This protein is one of the chains of the nonenzymatic membrane component (F0) of mitochondrial ATPase. The protein is ATP synthase subunit 9, mitochondrial (ATP9) of Triticum aestivum (Wheat).